The sequence spans 95 residues: Small ribosomal subunit protein bS6 (95 aa).

This sequence belongs to the bacterial ribosomal protein bS6 family.

Functionally, binds together with bS18 to 16S ribosomal RNA. The sequence is that of Small ribosomal subunit protein bS6 from Bacillus licheniformis (strain ATCC 14580 / DSM 13 / JCM 2505 / CCUG 7422 / NBRC 12200 / NCIMB 9375 / NCTC 10341 / NRRL NRS-1264 / Gibson 46).